A 281-amino-acid chain; its full sequence is 18S rRNA (guanine-N(7))-methyltransferase (281 aa).

Positions 212–231 are enriched in polar residues; sequence LPKGLTESQDADQASESMFT. Residues 212-281 form a disordered region; the sequence is LPKGLTESQD…YTGRKRKPRF (70 aa). Residues 242-256 are compositionally biased toward basic and acidic residues; that stretch reads RDLVKKSREWVLEKK.

This sequence belongs to the class I-like SAM-binding methyltransferase superfamily. BUD23/WBSCR22 family. As to quaternary structure, heterodimer with TRMT112; this heterodimerization is necessary for the metabolic stability and activity of the catalytic subunit BUD23. Interacts with GRIP1. Post-translationally, may be ubiquitinated and targeted to degradation in response to pro-inflammatory cytokine signaling.

It is found in the nucleus. Its subcellular location is the nucleoplasm. The protein resides in the cytoplasm. It localises to the perinuclear region. It carries out the reaction a guanosine in 18S rRNA + S-adenosyl-L-methionine = an N(7)-methylguanosine in 18S rRNA + S-adenosyl-L-homocysteine. In terms of biological role, S-adenosyl-L-methionine-dependent methyltransferase that specifically methylates the N(7) position of a guanine in 18S rRNA. Requires the methyltransferase adapter protein TRM112 for full rRNA methyltransferase activity. Involved in the pre-rRNA processing steps leading to small-subunit rRNA production independently of its RNA-modifying catalytic activity. Important for biogenesis end export of the 40S ribosomal subunit independent on its methyltransferase activity. Locus-specific steroid receptor coactivator. Potentiates transactivation by glucocorticoid (NR3C1), mineralocorticoid (NR3C2), androgen (AR) and progesterone (PGR) receptors. Required for the maintenance of open chromatin at the TSC22D3/GILZ locus to facilitate NR3C1 loading on the response elements. Required for maintenance of dimethylation on histone H3 'Lys-79' (H3K79me2), although direct histone methyltransferase activity is not observed in vitro. This chain is 18S rRNA (guanine-N(7))-methyltransferase, found in Mus musculus (Mouse).